Here is a 441-residue protein sequence, read N- to C-terminus: Transcriptional regulatory protein ZraR (441 aa).

A Response regulatory domain is found at 7-121 (DILVVDDDIS…NLQATLEKAL (115 aa)). D56 is modified (4-aspartylphosphate). In terms of domain architecture, Sigma-54 factor interaction spans 141–370 (MVGKSPAMQH…LENAVERAVV (230 aa)). 4 residues coordinate ATP: G172, T173, R329, and R359. A DNA-binding region (H-T-H motif) is located at residues 421–440 (KTEAARQLGITRKTLLAKLS).

In terms of assembly, monomer. In terms of processing, phosphorylated by ZraS.

The protein localises to the cytoplasm. With respect to regulation, activity of the ZraS/ZraR two-component system is repressed by the zinc-bound form of ZraP, which probably interacts with the periplasmic region of ZraS. Part of the Zra signaling pathway, an envelope stress response (ESR) system composed of the periplasmic accessory protein ZraP, the histidine kinase ZraS and the transcriptional regulator ZraR. The ZraPSR system contributes to antibiotic resistance and is important for membrane integrity in the presence of membrane-targeting biocides. ZraR is a member of the two-component regulatory system ZraS/ZraR. When activated by ZraS, acts in conjunction with sigma-54 to regulate the expression of zraP in the presence of high Zn(2+) or Pb(2+) concentrations. Also positively autoregulates the expression of the zraSR operon. Binds to a region within the zraP-zraSR intergenic region that is characterized by two inverted repeats separated by a 14 bp spacer. In addition, controls a regulon of genes of diverse functions that may be critical to maintain envelope integrity and cell survival under stressful conditions. The system has no direct role in zinc or copper resistance. In Escherichia coli (strain K12), this protein is Transcriptional regulatory protein ZraR.